Consider the following 185-residue polypeptide: uncharacterized protein (185 aa).

2 consecutive transmembrane segments (helical) span residues 1 to 21 (MMKFLLILIFLASFSFSLTPE) and 111 to 131 (FLWIITGIFTTLTASVIAFAW).

The protein to A.aeolicus aq_1900.

The protein localises to the cell membrane. This is an uncharacterized protein from Aquifex aeolicus (strain VF5).